The following is a 489-amino-acid chain: ATP synthase subunit beta, chloroplastic (489 aa).

Residue 170–177 coordinates ATP; that stretch reads GGAGVGKT.

The protein belongs to the ATPase alpha/beta chains family. As to quaternary structure, F-type ATPases have 2 components, CF(1) - the catalytic core - and CF(0) - the membrane proton channel. CF(1) has five subunits: alpha(3), beta(3), gamma(1), delta(1), epsilon(1). CF(0) has four main subunits: a(1), b(1), b'(1) and c(9-12).

It is found in the plastid. The protein localises to the chloroplast thylakoid membrane. It catalyses the reaction ATP + H2O + 4 H(+)(in) = ADP + phosphate + 5 H(+)(out). Produces ATP from ADP in the presence of a proton gradient across the membrane. The catalytic sites are hosted primarily by the beta subunits. The polypeptide is ATP synthase subunit beta, chloroplastic (Zygnema circumcarinatum (Green alga)).